The sequence spans 133 residues: Nodulation protein K (133 aa).

This chain is Nodulation protein K (nodK), found in Bradyrhizobium elkanii.